Here is a 594-residue protein sequence, read N- to C-terminus: Chondroitin sulfate proteoglycan 5 (594 aa).

Residues 1–12 (MGVGGTSASDTA) show a composition bias toward polar residues. A signal peptide spans 1 to 18 (MGVGGTSASDTALSLCPT). Disordered stretches follow at residues 1 to 325 (MGVG…PWGL) and 343 to 418 (TTSF…SECR). The Extracellular segment spans residues 19–481 (APEWPPRNGS…AIVTDFQVLC (463 aa)). N26 and N44 each carry an N-linked (GlcNAc...) asparagine glycan. The segment covering 140-181 (SPGLGLSSPGPNLGLPSLDLPNPNLGLPDPNLGLPNPSLGLP) has biased composition (low complexity). 2 stretches are compositionally biased toward pro residues: residues 182 to 195 (SPGPTPDRPIPNPN) and 219 to 229 (IPLPSPSPGPG). Residues 248–259 (PQPSSSPAPAQR) show a composition bias toward low complexity. Positions 298-310 (GGHGPGGGHGAGG) are enriched in gly residues. Residues 338–377 (ADFYPTTSFYAEGDDDAEEELEEDEEEEEEEDGGLEDENG) are interaction with TNC and TNR. Positions 349 to 375 (EGDDDAEEELEEDEEEEEEEDGGLEDE) are enriched in acidic residues. N413 and N425 each carry an N-linked (GlcNAc...) asparagine glycan. The 43-residue stretch at 429–471 (RSVCDLVPSYCHNGGQCYLVESHGAFCRCNTQDYTWHKGTRCE) folds into the EGF-like domain. 3 cysteine pairs are disulfide-bonded: C432–C445, C439–C455, and C457–C470. Residues 482–502 (VAVGSAALVLLLLFMLTVFFA) form a helical membrane-spanning segment. At 503–594 (KKLYLLKTEN…GVPCLHNNLG (92 aa)) the chain is on the cytoplasmic side. The tract at residues 535–594 (TIAEGSHPNDDPGAPHKLQDPLKPGLKDEEPLSILSTAPEEGSKGEPGGCGVPCLHNNLG) is disordered. The segment covering 541 to 564 (HPNDDPGAPHKLQDPLKPGLKDEE) has biased composition (basic and acidic residues).

As to quaternary structure, binds TNC and TNR. The 80 kDa form but not the 140 kDa form can bind TNC and TNR when expressed at the cell surface. In terms of processing, different forms exist: the 140 kDa form (also reported as 130 kDa), which probably consists of the entire protein, and the 38 and 80 kDa forms, which are probably cleaved in their N-terminus. Increase in synaptic activity, results in shedding of the extracellular domain and expression at the cell surface of a 38 kDa form. A form of 200 kDa has also been reported, which is probably hyperglycosylated. N-glycosylated. Post-translationally, O-glycosylated; contains chondroitin sulfate glycans. Part-time proteoglycan, the 200 kDa form is the only one containing chondroitin sulfate glycans. As to expression, expressed in astroglial and neuronal surfaces in different parts of the embryonic brain. Expressed in adult brain and retina (at protein level).

The protein localises to the cell membrane. Its function is as follows. May function as a growth and differentiation factor involved in neuritogenesis and more particularly in neurite extension. The chain is Chondroitin sulfate proteoglycan 5 (CSPG5) from Gallus gallus (Chicken).